A 433-amino-acid chain; its full sequence is ACT domain-containing protein ACR6 (433 aa).

ACT domains lie at 30–110 (VIQV…RSSV), 120–207 (SIEL…SCSD), 250–326 (VVTM…ASEG), and 328–402 (ELEL…VKKK).

May bind amino acids. This chain is ACT domain-containing protein ACR6, found in Arabidopsis thaliana (Mouse-ear cress).